The chain runs to 120 residues: MVFEIPEPYQWDETFEVFYEKLDEEHKGLFKGIKDLSDSPACSETLEKLVKLIEDHFTDEEEMMKSKSYEDLDSHKKIHSDFVETLKGVKAPVSEENIKMAKEWLVNHIKGTDFKYKGKL.

7 residues coordinate Fe cation: His26, His56, Glu60, His75, His79, His108, and Asp113.

The protein belongs to the hemerythrin family. In terms of assembly, monomer.

The protein resides in the cytoplasm. Myohemerythrin is an oxygen-binding protein found in the retractor muscles of certain worms. The oxygen-binding site contains two iron atoms. This chain is Myohemerythrin, found in Theromyzon tessulatum (Duck leech).